The following is a 331-amino-acid chain: Biotin synthase (331 aa).

The Radical SAM core domain occupies 52-277 (PDVEVEGIIS…RTMLRFAGGR (226 aa)). [4Fe-4S] cluster is bound by residues cysteine 67, cysteine 71, and cysteine 74. The [2Fe-2S] cluster site is built by cysteine 110, cysteine 143, cysteine 202, and arginine 272.

The protein belongs to the radical SAM superfamily. Biotin synthase family. As to quaternary structure, homodimer. [4Fe-4S] cluster is required as a cofactor. Requires [2Fe-2S] cluster as cofactor.

It catalyses the reaction (4R,5S)-dethiobiotin + (sulfur carrier)-SH + 2 reduced [2Fe-2S]-[ferredoxin] + 2 S-adenosyl-L-methionine = (sulfur carrier)-H + biotin + 2 5'-deoxyadenosine + 2 L-methionine + 2 oxidized [2Fe-2S]-[ferredoxin]. It functions in the pathway cofactor biosynthesis; biotin biosynthesis; biotin from 7,8-diaminononanoate: step 2/2. Its function is as follows. Catalyzes the conversion of dethiobiotin (DTB) to biotin by the insertion of a sulfur atom into dethiobiotin via a radical-based mechanism. The sequence is that of Biotin synthase from Mycolicibacterium vanbaalenii (strain DSM 7251 / JCM 13017 / BCRC 16820 / KCTC 9966 / NRRL B-24157 / PYR-1) (Mycobacterium vanbaalenii).